Here is a 594-residue protein sequence, read N- to C-terminus: Estrogen receptor (594 aa).

The interval 1–184 (MTMTLHTKAS…AMESAKETRY (184 aa)) is modulating (transactivation AF-1); mediates interaction with MACROD1. O-linked (GlcNAc) serine glycosylation occurs at Ser10. Residues 35–47 (LERPLGEVYVESS) are required for interaction with NCOA1. The interval 35–174 (LERPLGEVYV…LASSGDKGSM (140 aa)) is interaction with DDX5; self-association. A phosphoserine; by CDK2 mark is found at Ser104 and Ser106. Ser118 carries the phosphoserine modification. A disordered region spans residues 152–173 (PNADNRRQGGRERLASSGDKGS). Positions 154-165 (ADNRRQGGRERL) are enriched in basic and acidic residues. Position 167 is a phosphoserine; by CK2 (Ser167). NR C4-type zinc fingers lie at residues 185–205 (CAVC…CEGC) and 221–245 (CPAT…LRKC). Positions 185-250 (CAVCNDYASG…RLRKCYEVGM (66 aa)) form a DNA-binding region, nuclear receptor. Positions 185–310 (CAVCNDYASG…TKKISPVLSL (126 aa)) are mediates interaction with DNTTIP2. Residues 251 to 310 (MKGGIRKDRRGGRMLKHKRQRDDGEGRNEAGPSGDRRPANFWPSPLLIKHTKKISPVLSL) form a hinge region. Residues 257-269 (KDRRGGRMLKHKR) are compositionally biased toward basic residues. Residues 257 to 293 (KDRRGGRMLKHKRQRDDGEGRNEAGPSGDRRPANFWP) form a disordered region. The residue at position 260 (Arg260) is an Asymmetric dimethylarginine; by PRMT1. The tract at residues 262–594 (GRMLKHKRQR…GEAEGFPNTI (333 aa)) is interaction with AKAP13. Residues 264 to 594 (MLKHKRQRDD…GEAEGFPNTI (331 aa)) form a self-association region. Positions 270–288 (QRDDGEGRNEAGPSGDRRP) are enriched in basic and acidic residues. The region spanning 311-546 (TAEQMISALL…DLLLEMLDAH (236 aa)) is the NR LBD domain. The interval 311–594 (TAEQMISALL…GEAEGFPNTI (284 aa)) is transactivation AF-2. Residues Glu353 and Arg394 each coordinate 17beta-estradiol. The S-palmitoyl cysteine moiety is linked to residue Cys447. Residue His523 coordinates 17beta-estradiol. Tyr536 is modified (phosphotyrosine; by Tyr-kinases). The segment at 551–575 (PANHGGAPMEETNQSQLATTGSTSP) is disordered. Residues 561 to 575 (ETNQSQLATTGSTSP) are compositionally biased toward polar residues. O-linked (GlcNAc) threonine glycosylation is present at Thr570.

It belongs to the nuclear hormone receptor family. NR3 subfamily. In terms of assembly, binds DNA as a homodimer. Can form a heterodimer with ESR2. Interacts with coactivator NCOA5. Interacts with PELP1, the interaction is enhanced by 17-beta-estradiol; the interaction increases ESR1 transcriptional activity. Interacts with NCOA7; the interaction is ligand-inducible. Interacts with AKAP13, CUEDC2, HEXIM1, KDM5A, MAP1S, SMARD1, and UBE1C. Interacts with MUC1; the interaction is stimulated by 7 beta-estradiol (E2) and enhances ESR1-mediated transcription. Interacts with DNTTIP2, and UIMC1. Interacts with KMT2D/MLL2. Interacts with ATAD2; the interaction is enhanced by estradiol. Interacts with KIF18A and LDB1. Interacts with RLIM (via its C-terminus). Interacts with MACROD1. Interacts with SH2D4A and PLCG. Interacts with SH2D4A; the interaction blocks binding to PLCG and inhibits estrogen-induced cell proliferation. Interacts with DYNLL1. Interacts with CCDC62; the interaction requires estradiol and appears to enhance the transcription of target genes. Interacts with NR2C1; the interaction prevents homodimerization of ESR1 and suppresses its transcriptional activity and cell growth. Interacts with DNAAF4. Interacts with PRMT2. Interacts with RBFOX2. Interacts with EP300; the interaction is estrogen-dependent and enhanced by CITED1. Interacts with CITED1; the interaction is estrogen-dependent. Interacts with FAM120B, FOXL2, PHB2 and SLC30A9. Interacts with coactivators NCOA3 and NCOA6. Interacts with STK3/MST2 only in the presence of SAV1 and vice-versa. Binds to CSNK1D. Interacts with NCOA2; NCOA2 can interact with ESR1 AF-1 and AF-2 domains simultaneously and mediate their transcriptional synergy. Interacts with DDX5. Interacts with NCOA1; the interaction seems to require a self-association of N-terminal and C-terminal regions. Interacts with ZNF366, DDX17, NFKB1, RELA, SP1 and SP3. Interacts with NRIP1. Interacts with GPER1; the interaction occurs in an estrogen-dependent manner. Interacts with CLOCK and the interaction is stimulated by estrogen. Interacts with TRIP4 (ufmylated); estrogen dependent. Interacts with LMTK3; the interaction phosphorylates ESR1 (in vitro) and protects it against proteasomal degradation. Interacts with CCAR2 (via N-terminus) in a ligand-independent manner. Interacts with ZFHX3. Interacts with SFR1 in a ligand-dependent and -independent manner. Interacts with DCAF13, LATS1 and DCAF1; regulates ESR1 ubiquitination and ubiquitin-mediated proteasomal degradation. Interacts (via DNA-binding domain) with POU4F2 (C-terminus); this interaction increases the estrogen receptor ESR1 transcriptional activity in a DNA- and ligand 17-beta-estradiol-independent manner. Interacts with ESRRB isoform 1. Interacts with UBE3A and WBP2. Interacts with GTF2B. Interacts with RBM39. In the absence of hormonal ligand, interacts with TACC1. Interacts with PI3KR1 or PI3KR2 and PTK2/FAK1. Interacts with SRC. Interacts with BAG1; the interaction is promoted in the absence of estradiol (17-beta-estradiol/E2). Interacts with and ubiquitinated by STUB1; the interaction is promoted in the absence of estradiol (17-beta-estradiol/E2). Interacts with NEDD8. Ubiquitinated; regulated by LATS1 via DCAF1 it leads to ESR1 proteasomal degradation. Deubiquitinated by OTUB1. Ubiquitinated by STUB1/CHIP; in the CA1 hippocampal region following loss of endogenous circulating estradiol (17-beta-estradiol/E2). Ubiquitinated by UBR5, leading to its degradation: UBR5 specifically recognizes and binds ligand-bound ESR1 when it is not associated with coactivators (NCOAs). In presence of NCOAs, the UBR5-degron is not accessible, preventing its ubiquitination and degradation. Post-translationally, phosphorylated by cyclin A/CDK2 and CK1. Phosphorylation probably enhances transcriptional activity. Dephosphorylation at Ser-118 by PPP5C inhibits its transactivation activity. Phosphorylated by LMTK3 (in vitro). In terms of processing, palmitoylated at Cys-447 by ZDHHC7 and ZDHHC21. Palmitoylation is required for plasma membrane targeting and for rapid intracellular signaling via ERK and AKT kinases and cAMP generation, but not for signaling mediated by the nuclear hormone receptor. Dimethylated by PRMT1 at Arg-260. The methylation may favor cytoplasmic localization. Demethylated by JMJD6 at Arg-260.

It is found in the nucleus. The protein resides in the cytoplasm. Its subcellular location is the golgi apparatus. The protein localises to the cell membrane. Nuclear hormone receptor. The steroid hormones and their receptors are involved in the regulation of eukaryotic gene expression and affect cellular proliferation and differentiation in target tissues. Ligand-dependent nuclear transactivation involves either direct homodimer binding to a palindromic estrogen response element (ERE) sequence or association with other DNA-binding transcription factors, such as AP-1/c-Jun, c-Fos, ATF-2, Sp1 and Sp3, to mediate ERE-independent signaling. Ligand binding induces a conformational change allowing subsequent or combinatorial association with multiprotein coactivator complexes through LXXLL motifs of their respective components. Mutual transrepression occurs between the estrogen receptor (ER) and NF-kappa-B in a cell-type specific manner. Decreases NF-kappa-B DNA-binding activity and inhibits NF-kappa-B-mediated transcription from the IL6 promoter and displace RELA/p65 and associated coregulators from the promoter. Recruited to the NF-kappa-B response element of the CCL2 and IL8 promoters and can displace CREBBP. Present with NF-kappa-B components RELA/p65 and NFKB1/p50 on ERE sequences. Can also act synergistically with NF-kappa-B to activate transcription involving respective recruitment adjacent response elements; the function involves CREBBP. Can activate the transcriptional activity of TFF1. Also mediates membrane-initiated estrogen signaling involving various kinase cascades. Essential for MTA1-mediated transcriptional regulation of BRCA1 and BCAS3. Maintains neuronal survival in response to ischemic reperfusion injury when in the presence of circulating estradiol (17-beta-estradiol/E2). The protein is Estrogen receptor (ESR1) of Equus caballus (Horse).